A 636-amino-acid chain; its full sequence is Probable Xaa-Pro aminopeptidase P (636 aa).

Mn(2+) contacts are provided by Asp-414, Asp-425, Glu-523, and Glu-537.

The protein belongs to the peptidase M24B family. Mn(2+) serves as cofactor.

The enzyme catalyses Release of any N-terminal amino acid, including proline, that is linked to proline, even from a dipeptide or tripeptide.. Catalyzes the removal of a penultimate prolyl residue from the N-termini of peptides. This Ajellomyces capsulatus (strain H143) (Darling's disease fungus) protein is Probable Xaa-Pro aminopeptidase P (AMPP).